Consider the following 435-residue polypeptide: Putative GMP synthase [glutamine-hydrolyzing] 2 (435 aa).

One can recognise a Glutamine amidotransferase type-1; truncated domain in the interval 1–120; sequence MKQDMIVILD…VFDTCQAEAN (120 aa). A GMPS ATP-PPase domain is found at 121-310; sequence WNMANFVNDQ…LGLPYEMVYR (190 aa). 148 to 154 is a binding site for ATP; it reads SGGVDSS.

As to quaternary structure, homodimer.

It catalyses the reaction XMP + L-glutamine + ATP + H2O = GMP + L-glutamate + AMP + diphosphate + 2 H(+). It participates in purine metabolism; GMP biosynthesis; GMP from XMP (L-Gln route): step 1/1. Catalyzes the synthesis of GMP from XMP. This is Putative GMP synthase [glutamine-hydrolyzing] 2 (guaA2) from Bacteroides thetaiotaomicron (strain ATCC 29148 / DSM 2079 / JCM 5827 / CCUG 10774 / NCTC 10582 / VPI-5482 / E50).